The sequence spans 174 residues: tRNA (cytidine(56)-2'-O)-methyltransferase (174 aa).

Residues Leu83, 108–112 (GAEKV), and 126–133 (VGNQPHSE) each bind S-adenosyl-L-methionine.

Belongs to the aTrm56 family. In terms of assembly, homodimer.

The protein resides in the cytoplasm. It catalyses the reaction cytidine(56) in tRNA + S-adenosyl-L-methionine = 2'-O-methylcytidine(56) in tRNA + S-adenosyl-L-homocysteine + H(+). Functionally, specifically catalyzes the AdoMet-dependent 2'-O-ribose methylation of cytidine at position 56 in tRNAs. This is tRNA (cytidine(56)-2'-O)-methyltransferase from Methanothrix thermoacetophila (strain DSM 6194 / JCM 14653 / NBRC 101360 / PT) (Methanosaeta thermophila).